A 362-amino-acid chain; its full sequence is MGIYLSTPKTDKFSEDGENDKLKLGLSSMQGWRANMEDAHSALLNLDNETSFFGVFDGHGGRVVAKFCAKYLHSQVLRSEAYSAGDLGTAVHRAFFRMDEMMRGQRGWRELSALGDKINKIGGMIEGLIWSPRGSDSNNGQDDWSFEEGPHSDFAGPTCGCTACVALIRNNQLVVANAGDSRCVISRAGQAYNLSRDHKPELEAERDRIVKAGGFIHMGRINGSLNLTRAIGDMEFKQNKFLPPEKQIVTANPDINVVELCDDDDFLVLACDGIWDCMSSQQLVDFIHEHIQKESSLSAVCERVLDRCLAPSTIGGEGCDNMTMVLVQFKKPITQNKKADVGEQSVKGVEEAEINAAEENGS.

The PPM-type phosphatase domain maps to 23–329; it reads KLGLSSMQGW…DNMTMVLVQF (307 aa). Mn(2+) contacts are provided by D57, G58, D272, and D320.

The protein belongs to the PP2C family. Mg(2+) is required as a cofactor. Mn(2+) serves as cofactor.

The enzyme catalyses O-phospho-L-seryl-[protein] + H2O = L-seryl-[protein] + phosphate. It catalyses the reaction O-phospho-L-threonyl-[protein] + H2O = L-threonyl-[protein] + phosphate. The protein is Probable protein phosphatase 2C 11 of Oryza sativa subsp. japonica (Rice).